The sequence spans 270 residues: DNA adenine methylase (270 aa).

Residues W10, K14, D54, and D181 each coordinate S-adenosyl-L-methionine.

Belongs to the N(4)/N(6)-methyltransferase family.

It catalyses the reaction a 2'-deoxyadenosine in DNA + S-adenosyl-L-methionine = an N(6)-methyl-2'-deoxyadenosine in DNA + S-adenosyl-L-homocysteine + H(+). An alpha subtype methylase, recognizes the double-stranded sequence 5'-GATC-3' and methylates A-2. Overexpression leads to hypermutability. May be involved in methyl-directed DNA mismatch repair, initiation of chromosome replication and gene expression. The sequence is that of DNA adenine methylase from Serratia marcescens.